The following is a 702-amino-acid chain: Methionine--tRNA ligase (702 aa).

Residues 23 to 33 (PYANGPLHLGH) carry the 'HIGH' region motif. Zn(2+)-binding residues include Cys154, Cys157, Cys167, and Cys170. The short motif at 341–345 (KMSKS) is the 'KMSKS' region element. ATP is bound at residue Lys344. The tract at residues 562 to 593 (LAPPPASAKQQNASMSNTAPPPTAEKPETTAP) is disordered. The span at 569–578 (AKQQNASMSN) shows a compositional bias: polar residues. A tRNA-binding domain is found at 599 to 702 (DFAKLDLRIG…SSAQPGMPVR (104 aa)).

This sequence belongs to the class-I aminoacyl-tRNA synthetase family. MetG type 1 subfamily. Homodimer. Zn(2+) is required as a cofactor.

Its subcellular location is the cytoplasm. The catalysed reaction is tRNA(Met) + L-methionine + ATP = L-methionyl-tRNA(Met) + AMP + diphosphate. Functionally, is required not only for elongation of protein synthesis but also for the initiation of all mRNA translation through initiator tRNA(fMet) aminoacylation. This chain is Methionine--tRNA ligase, found in Xylella fastidiosa (strain 9a5c).